Consider the following 398-residue polypeptide: Probable pectate lyase P56 (398 aa).

Residues 1-27 (MEYSYRTKINVLFIVLILFVFAALGTA) form the signal peptide. Residue Asn135 is glycosylated (N-linked (GlcNAc...) asparagine). 3 residues coordinate Ca(2+): Asp192, Asp217, and Asp221. Asn228 carries N-linked (GlcNAc...) asparagine glycosylation. Arg273 is a catalytic residue.

The protein belongs to the polysaccharide lyase 1 family. Requires Ca(2+) as cofactor. Expressed in anthers and pollen.

The enzyme catalyses Eliminative cleavage of (1-&gt;4)-alpha-D-galacturonan to give oligosaccharides with 4-deoxy-alpha-D-galact-4-enuronosyl groups at their non-reducing ends.. It participates in glycan metabolism; pectin degradation; 2-dehydro-3-deoxy-D-gluconate from pectin: step 2/5. Might be needed during pollen development and tube growth. The chain is Probable pectate lyase P56 (LAT56) from Solanum lycopersicum (Tomato).